The following is a 639-amino-acid chain: MRFFNAHKSAEDGNYSETTNAISLKNERQSRDLSVNKHGRMLLTALLENFCQLYDNNPAKSKRLFALICHTLQKIGILEEEYIEELAAVRSNYQDALHHLILQAREAIRLDDAEERLLALPDPTNVFEKFPQETALSKFSVDGLNVRQFRFRDLTLESWLQSRNSRYIEDFEEYSLLGRGGFGSVYHVRNKIDGAEYAMKKINSTFQQMSYSKIFREIKCLAKMDHPNVIRYFSSWVESTTEATQMPIVMSKNSSRVLGTSSYCDVNGMDSIIFEPTESSALTDDILFAEDPGTESIISTSRKSSYSSTTESSNFENLESPRNLHDSNVSTFNNTTILDDDYSSSMHISKTGPTHSFIIYIQMQLCFDDLESYLIRRNHFLSFPLCKEQIQLHTDLFRMIINGVMYVHEGVNLIHRDIKPSNIFLAKSLPEDRGSVPLISYNDKNDLKEYITPKIGDFGLVVENKKNTETALSFLERNHLPNLQDETQHIGTATYAAPELLDAMSSQHNKFTKKIDTFSLGMVLFELLHPFQTNMERATKLQDLRRGNLPEEFVEQHICESSLILWMTAKDPTKRPSLLEVLNCGLLLPNQVSMPNISNIVSTNHLDVETQMKLIMDENQRLREQIAVLRSRIQHLETR.

Residues 171–588 (FEEYSLLGRG…LEVLNCGLLL (418 aa)) enclose the Protein kinase domain. Residues 177-185 (LGRGGFGSV) and K200 contribute to the ATP site. Residues 298–320 (ISTSRKSSYSSTTESSNFENLES) are compositionally biased toward low complexity. The interval 298–322 (ISTSRKSSYSSTTESSNFENLESPR) is disordered. D417 acts as the Proton acceptor in catalysis.

The protein belongs to the protein kinase superfamily. Ser/Thr protein kinase family. GCN2 subfamily. Autophosphorylated.

The enzyme catalyses L-seryl-[protein] + ATP = O-phospho-L-seryl-[protein] + ADP + H(+). The catalysed reaction is L-threonyl-[protein] + ATP = O-phospho-L-threonyl-[protein] + ADP + H(+). In terms of biological role, mediates down-regulation of protein synthesis in response to stress conditions by the phosphorylation of the alpha subunit of eIF-2 (tif211) on 'Ser-52'. Protein synthesis is inhibited at the level of initiation. Activity is inhibited in the presence of heme. This is Eukaryotic translation initiation factor 2-alpha kinase 2 (hri2) from Schizosaccharomyces pombe (strain 972 / ATCC 24843) (Fission yeast).